Reading from the N-terminus, the 335-residue chain is Biotin synthase (335 aa).

One can recognise a Radical SAM core domain in the interval 51–278 (NTVQLSSLLS…LAKVRLSAGR (228 aa)). [4Fe-4S] cluster contacts are provided by Cys66, Cys70, and Cys73. [2Fe-2S] cluster-binding residues include Cys110, Cys141, Cys201, and Arg273.

Belongs to the radical SAM superfamily. Biotin synthase family. Homodimer. It depends on [4Fe-4S] cluster as a cofactor. [2Fe-2S] cluster is required as a cofactor.

The enzyme catalyses (4R,5S)-dethiobiotin + (sulfur carrier)-SH + 2 reduced [2Fe-2S]-[ferredoxin] + 2 S-adenosyl-L-methionine = (sulfur carrier)-H + biotin + 2 5'-deoxyadenosine + 2 L-methionine + 2 oxidized [2Fe-2S]-[ferredoxin]. It participates in cofactor biosynthesis; biotin biosynthesis; biotin from 7,8-diaminononanoate: step 2/2. Functionally, catalyzes the conversion of dethiobiotin (DTB) to biotin by the insertion of a sulfur atom into dethiobiotin via a radical-based mechanism. The chain is Biotin synthase from Bordetella bronchiseptica (strain ATCC BAA-588 / NCTC 13252 / RB50) (Alcaligenes bronchisepticus).